A 753-amino-acid polypeptide reads, in one-letter code: Putative cyclic nucleotide-gated ion channel 8 (753 aa).

The Cytoplasmic portion of the chain corresponds to 1-111 (MYKSQYISGH…DKTLLLWNRM (111 aa)). The helical transmembrane segment at 112–132 (FVISCILAVSVDPLFFYLPIV) threads the bilayer. Over 133–145 (DNSKNCIGIDSKL) the chain is Extracellular. Residues 146–166 (AVTTTTLRTIIDVFYLTRMAL) form a helical membrane-spanning segment. The Cytoplasmic portion of the chain corresponds to 167 to 199 (QFRTAYIAPSSRVFGRGELVIDPAKIAERYLTR). Residues 200–220 (YFIVDFLAVLPLPQIAVWKFL) traverse the membrane as a helical segment. Over 221–233 (HGSKGTDVLPTKQ) the chain is Extracellular. The chain crosses the membrane as a helical span at residues 234-254 (ALLHIVITQYIPRFVRFIPLT). The Cytoplasmic portion of the chain corresponds to 255–274 (SELKKTAGAFAEGAWAGAAY). The chain crosses the membrane as a helical span at residues 275-295 (YLLWYMLASHITGAFWYMLSV). Topologically, residues 296–402 (ERNDTCLRSA…QGLQTSTYPG (107 aa)) are extracellular. Residues 403-423 (EVLFSIAIAVAGLLLFALLIG) form a helical membrane-spanning segment. Over 424 to 753 (NMQTYLQSLT…FEALDTDDLN (330 aa)) the chain is Cytoplasmic. A nucleoside 3',5'-cyclic phosphate contacts are provided by residues 508–638 (LFAN…TFRF) and glutamate 579. The segment at 624–639 (FRRLHSRQVQQTFRFY) is calmodulin-binding. Residues 644–673 (RTWAACFIQAAWRRHLRRKIAELRRKEEEE) form the IQ domain. The tract at residues 731–753 (KSLMNLTKPSEPDFEALDTDDLN) is disordered. Over residues 742-753 (PDFEALDTDDLN) the composition is skewed to acidic residues.

Belongs to the cyclic nucleotide-gated cation channel (TC 1.A.1.5) family. In terms of assembly, homotetramer or heterotetramer.

Its subcellular location is the cell membrane. Putative cyclic nucleotide-gated ion channel. The chain is Putative cyclic nucleotide-gated ion channel 8 (CNGC8) from Arabidopsis thaliana (Mouse-ear cress).